The following is a 651-amino-acid chain: Acetyl-coenzyme A synthetase (651 aa).

Residues 189-192, T311, and N335 each bind CoA; that span reads RGGK. ATP-binding positions include 387–389, 411–416, D500, and R515; these read GEP and DTWWQT. Position 523 (S523) interacts with CoA. R526 serves as a coordination point for ATP. 3 residues coordinate Mg(2+): V537, H539, and V542. R586 contributes to the CoA binding site. K611 bears the N6-acetyllysine mark.

The protein belongs to the ATP-dependent AMP-binding enzyme family. Requires Mg(2+) as cofactor. In terms of processing, acetylated. Deacetylation by the SIR2-homolog deacetylase activates the enzyme.

It carries out the reaction acetate + ATP + CoA = acetyl-CoA + AMP + diphosphate. Functionally, catalyzes the conversion of acetate into acetyl-CoA (AcCoA), an essential intermediate at the junction of anabolic and catabolic pathways. AcsA undergoes a two-step reaction. In the first half reaction, AcsA combines acetate with ATP to form acetyl-adenylate (AcAMP) intermediate. In the second half reaction, it can then transfer the acetyl group from AcAMP to the sulfhydryl group of CoA, forming the product AcCoA. The protein is Acetyl-coenzyme A synthetase of Brucella melitensis biotype 2 (strain ATCC 23457).